We begin with the raw amino-acid sequence, 110 residues long: Insulin-1 (110 aa).

The first 24 residues, 1-24 (MALWMRFLPLLALLVLWEPKPAQA), serve as a signal peptide directing secretion. Cystine bridges form between C31-C96, C43-C109, and C95-C100. A propeptide spans 57-87 (EVEDPQVPQLELGGGPEAGDLQTLALEVARQ) (c peptide).

The protein belongs to the insulin family. Heterodimer of a B chain and an A chain linked by two disulfide bonds.

The protein resides in the secreted. Insulin decreases blood glucose concentration. It increases cell permeability to monosaccharides, amino acids and fatty acids. It accelerates glycolysis, the pentose phosphate cycle, and glycogen synthesis in liver. The chain is Insulin-1 (Ins1) from Rattus norvegicus (Rat).